Here is a 318-residue protein sequence, read N- to C-terminus: Methionyl-tRNA formyltransferase (318 aa).

110–113 (SLLP) is a (6S)-5,6,7,8-tetrahydrofolate binding site.

This sequence belongs to the Fmt family.

It carries out the reaction L-methionyl-tRNA(fMet) + (6R)-10-formyltetrahydrofolate = N-formyl-L-methionyl-tRNA(fMet) + (6S)-5,6,7,8-tetrahydrofolate + H(+). In terms of biological role, attaches a formyl group to the free amino group of methionyl-tRNA(fMet). The formyl group appears to play a dual role in the initiator identity of N-formylmethionyl-tRNA by promoting its recognition by IF2 and preventing the misappropriation of this tRNA by the elongation apparatus. The chain is Methionyl-tRNA formyltransferase from Ligilactobacillus salivarius (strain UCC118) (Lactobacillus salivarius).